The chain runs to 1132 residues: Sentrin-specific protease 6 (1132 aa).

Disordered stretches follow at residues 23–51 (SKRD…DGAN) and 327–388 (LPGG…VPST). Phosphoserine is present on residues Ser41, Ser355, Ser356, Ser371, and Ser373. Residue Thr436 is modified to Phosphothreonine. Residue Lys648 forms a Glycyl lysine isopeptide (Lys-Gly) (interchain with G-Cter in SUMO2) linkage. The segment at 686–1132 (ISVTNEDLHC…QYASASGGSE (447 aa)) is protease. Catalysis depends on residues His785 and Asp936. A Phosphoserine modification is found at Ser938. The active site involves Cys1049. Ser1131 carries the phosphoserine modification.

The protein belongs to the peptidase C48 family. In terms of assembly, interacts with RXRA. Forms a complex with KAT5-TIP60 and UBE2I in response to UV irradiation. Interacts with RPA1 to maintain it in hyposumoylated state during S phase preventing DNA repair initiation.

It is found in the nucleus. It participates in protein modification; protein sumoylation. In terms of biological role, protease that deconjugates SUMO1, SUMO2 and SUMO3 from targeted proteins. Processes preferentially poly-SUMO2 and poly-SUMO3 chains, but does not efficiently process SUMO1, SUMO2 and SUMO3 precursors. Deconjugates SUMO1 from RXRA, leading to transcriptional activation. Involved in chromosome alignment and spindle assembly, by regulating the kinetochore CENPH-CENPI-CENPK complex. Desumoylates PML and CENPI, protecting them from degradation by the ubiquitin ligase RNF4, which targets polysumoylated proteins for proteasomal degradation. Also desumoylates RPA1, thus preventing recruitment of RAD51 to the DNA damage foci to initiate DNA repair through homologous recombination. The chain is Sentrin-specific protease 6 (Senp6) from Mus musculus (Mouse).